Reading from the N-terminus, the 1151-residue chain is ATP-dependent RNA helicase ddx46 (1151 aa).

Basic and acidic residues-rich tracts occupy residues 1–26 (MDEY…DNRN) and 35–51 (YRDD…DRSH). 4 disordered regions span residues 1-138 (MDEY…SRFD), 166-224 (MYQQ…VFQQ), 287-358 (QELK…PLVN), and 424-449 (TSQM…DKTI). Residues 52–73 (YNNNNNNNNNNNNNNNNNNGNG) are compositionally biased toward low complexity. The span at 81–90 (SSQNKYQNHH) shows a compositional bias: polar residues. 4 stretches are compositionally biased toward low complexity: residues 91–124 (QQSP…QPHI), 166–199 (MYQQ…FQHH), 207–224 (QPPV…VFQQ), and 291–339 (ASGS…TTSP). Residues 428–443 (IDDDEKLEEESEGEDD) show a composition bias toward acidic residues. A Q motif motif is present at residues 509-537 (QSWAQAGLTEKVHLLLKKFQYEKPTSIQA). The Helicase ATP-binding domain maps to 540–718 (IPAIMNGRDL…KKILNKPLEI (179 aa)). 553–560 (ARTGSGKT) contributes to the ATP binding site. The DEAD box motif lies at 666–669 (DEAD). The Helicase C-terminal domain maps to 729-890 (DIEQFVEVRP…KVPDELRKLN (162 aa)). The tract at residues 904-972 (LLAPTGFTGR…EKEKQLLSEK (69 aa)) is disordered. Residues 915 to 930 (HKFDAAEEDKKNIERK) are compositionally biased toward basic and acidic residues. Positions 938 to 948 (IEEEEEEEDED) are enriched in acidic residues. Residues 949–972 (KEKAEKEKLAAASAEKEKQLLSEK) show a composition bias toward basic and acidic residues.

The protein belongs to the DEAD box helicase family. DDX46/PRP5 subfamily. Component of the 17S U2 SnRNP complex, a ribonucleoprotein complex that contains small nuclear RNA (snRNA) U2 and a number of specific proteins.

It localises to the nucleus speckle. The catalysed reaction is ATP + H2O = ADP + phosphate + H(+). Its function is as follows. Component of the 17S U2 SnRNP complex of the spliceosome, a large ribonucleoprotein complex that removes introns from transcribed pre-mRNAs. This chain is ATP-dependent RNA helicase ddx46 (helB1), found in Dictyostelium discoideum (Social amoeba).